Consider the following 314-residue polypeptide: Epithelial cell adhesion molecule (314 aa).

An N-terminal signal peptide occupies residues 1–23 (MAPPQVLAFGLLLAAATAAVAAA). Over 24-265 (QQGCVCENYK…PPEFSMQGLQ (242 aa)) the chain is Extracellular. 6 disulfides stabilise this stretch: cysteine 27–cysteine 46, cysteine 29–cysteine 59, cysteine 38–cysteine 48, cysteine 66–cysteine 99, cysteine 110–cysteine 116, and cysteine 118–cysteine 135. N-linked (GlcNAc...) asparagine glycosylation is present at asparagine 37. Residues 63-135 (ASKCLVMKAE…RTDKDSEISC (73 aa)) enclose the Thyroglobulin type-1 domain. The N-linked (GlcNAc...) asparagine glycan is linked to asparagine 111. The N-linked (GlcNAc...) asparagine glycan is linked to asparagine 198. Residues 266 to 288 (AGIIAVIAVVAIAIVAGIIVLIV) form a helical membrane-spanning segment. Topologically, residues 289 to 314 (STKKRRAKYEKAEIKEMGEMHRELNA) are cytoplasmic.

It belongs to the EPCAM family. In terms of assembly, monomer. Interacts with phosphorylated CLDN7. Post-translationally, glycosylation at Asn-198 is crucial for protein stability.

Its subcellular location is the lateral cell membrane. It localises to the cell junction. The protein localises to the tight junction. May act as a physical homophilic interaction molecule between intestinal epithelial cells (IECs) and intraepithelial lymphocytes (IELs) at the mucosal epithelium for providing immunological barrier as a first line of defense against mucosal infection. Plays a role in embryonic stem cells proliferation and differentiation. Up-regulates the expression of FABP5, MYC and cyclins A and E. The chain is Epithelial cell adhesion molecule (TACSTD1) from Sus scrofa (Pig).